Reading from the N-terminus, the 134-residue chain is Small ribosomal subunit protein uS8 (134 aa).

This sequence belongs to the universal ribosomal protein uS8 family. In terms of assembly, part of the 30S ribosomal subunit. Contacts proteins S5 and S12.

Functionally, one of the primary rRNA binding proteins, it binds directly to 16S rRNA central domain where it helps coordinate assembly of the platform of the 30S subunit. This is Small ribosomal subunit protein uS8 from Synechococcus sp. (strain JA-3-3Ab) (Cyanobacteria bacterium Yellowstone A-Prime).